Consider the following 1270-residue polypeptide: Myosin-3 (1270 aa).

Positions Met1 to Ser20 are disordered. The Myosin motor domain maps to Val36 to Asp715. ATP is bound at residue Gly129–Thr136. At Ser357 the chain carries Phosphoserine. The segment at Ser404 to Ser486 is actin-binding. 2 consecutive IQ domains span residues Tyr719–Ala739 and Ala740–Lys765. Positions Lys771–Ala961 constitute a TH1 domain. 3 disordered regions span residues Ser951–Val1015, Tyr1029–Ser1136, and Val1215–Trp1270. Residues Ile980–His1000 show a composition bias toward basic residues. A compositionally biased stretch (low complexity) spans Lys1066–Lys1078. A compositionally biased stretch (basic and acidic residues) spans Gly1089 to Lys1098. Over residues Pro1107–Gly1116 the composition is skewed to pro residues. Positions Pro1118–Asp1180 constitute an SH3 domain. The segment covering Val1215–Gly1234 has biased composition (polar residues). The span at Ala1256 to Trp1270 shows a compositional bias: acidic residues.

This sequence belongs to the TRAFAC class myosin-kinesin ATPase superfamily. Myosin family. In terms of assembly, interacts (via myosin motor domain) with SHE4; this interaction is important for proper localization and may regulate the interaction of the motor domain with actin. Interacts (via SH3 domain) with VRP1; this interaction is required for localization to sites of polarized growth and may regulate the interaction of the tail domain with actin. Interacts (via SH3 domain) with PAN1; this interaction is important for late stages of endocytopsis. Interacts (via SH3 domain) with BBC1 and LAS17. Interacts (via C-terminal acidic tail) with ARC19 and ARC40; ARC19 and ARC40 are Arp2/3 complex subunits. Phosphorylation of the TEDS site (Ser-357) is required for the polarization of the actin cytoskeleton and for ligand-induced, but not for constitutive internalization of STE2. Phosphorylation probably activates the myosin-I ATPase. Ser-357 is phosphorylated by CLA4 and STE20 in vitro.

The protein resides in the cytoplasm. It localises to the cytoskeleton. Its subcellular location is the actin patch. Functionally, one of two redundant type-I myosins implicated in the organization of the actin cytoskeleton. Required for proper actin cytoskeleton polarization and for the internalization step in endocytosis. At the cell cortex, assembles in patch-like structures together with proteins from the actin-polymerizing machinery and promotes actin assembly. Functions redundantly with LAS17 as actin nucleation-promoting factor (NPF) for the Arp2/3 complex. Motor domain phosphorylation by PAK kinases CLA4 and STE20 promotes CDC42-regulated actin assembly. Functions together with the NPF PAN1 in late stages of endocytosis. Motor domain phosphorylation by PDK1 kinases PKH1 and PKH2, and by SGK kinases YPK1 and YPK2, promotes ligand-induced, but not constitutive endocytosis of the G protein-coupled receptor STE2. This is Myosin-3 (MYO3) from Saccharomyces cerevisiae (strain YJM789) (Baker's yeast).